Consider the following 238-residue polypeptide: Sugar fermentation stimulation protein homolog (238 aa).

Belongs to the SfsA family.

In Haemophilus influenzae (strain 86-028NP), this protein is Sugar fermentation stimulation protein homolog.